The chain runs to 171 residues: Phosphopantetheine adenylyltransferase (171 aa).

T9 contacts substrate. Residues 9–10 (TF) and H17 contribute to the ATP site. Residues K41, L78, and R92 each contribute to the substrate site. Residues 93–95 (GLR), E103, and 128–134 (HQAIASK) each bind ATP.

The protein belongs to the bacterial CoaD family. Homohexamer. Mg(2+) is required as a cofactor.

It is found in the cytoplasm. The catalysed reaction is (R)-4'-phosphopantetheine + ATP + H(+) = 3'-dephospho-CoA + diphosphate. It functions in the pathway cofactor biosynthesis; coenzyme A biosynthesis; CoA from (R)-pantothenate: step 4/5. In terms of biological role, reversibly transfers an adenylyl group from ATP to 4'-phosphopantetheine, yielding dephospho-CoA (dPCoA) and pyrophosphate. The polypeptide is Phosphopantetheine adenylyltransferase (Dinoroseobacter shibae (strain DSM 16493 / NCIMB 14021 / DFL 12)).